The chain runs to 183 residues: Large ribosomal subunit protein bL32m (183 aa).

A mitochondrion-targeting transit peptide spans 1-71 (MNSLIFGKQL…DFFSNNGILL (71 aa)). 4 residues coordinate Zn(2+): C104, C107, C117, and C120.

The protein belongs to the bacterial ribosomal protein bL32 family. As to quaternary structure, component of the mitochondrial large ribosomal subunit (mt-LSU). Mature yeast 74S mitochondrial ribosomes consist of a small (37S) and a large (54S) subunit. The 37S small subunit contains a 15S ribosomal RNA (15S mt-rRNA) and 34 different proteins. The 54S large subunit contains a 21S rRNA (21S mt-rRNA) and 46 different proteins. bL32m has a zinc binding site. Post-translationally, MRPL32 precursor is processed by the m-AAA protease (composed of YTA12/RCA1 and YTA10/AFG3), which cleaves the N-terminal transit peptide. Cleavage by the m-AAA protease takes place prior to assembly into the large subunit, an essential step for mitochondrial ribosome (mitoribosome) assembly. Proper processing by the m-AAA protease is dependent on the zinc-binding region within the tightly folded C-terminal domain of MRPL32: zinc-dependent folding halts degradation initiated from the N-terminus and triggers the release of mature MRPL32.

The protein localises to the mitochondrion. Component of the mitochondrial ribosome (mitoribosome), a dedicated translation machinery responsible for the synthesis of mitochondrial genome-encoded proteins, including at least some of the essential transmembrane subunits of the mitochondrial respiratory chain. The mitoribosomes are attached to the mitochondrial inner membrane and translation products are cotranslationally integrated into the membrane. The sequence is that of Large ribosomal subunit protein bL32m from Saccharomyces cerevisiae (strain ATCC 204508 / S288c) (Baker's yeast).